Here is a 317-residue protein sequence, read N- to C-terminus: E3 ubiquitin-protein ligase NRDP1 (317 aa).

The segment at 18–57 adopts an RING-type; degenerate zinc-finger fold; the sequence is CPICSGVLEEPVQAPHCEHAFCNACITQWFSQQQTCPVDR. Residues 78–138 form an SIAH-type; degenerate zinc finger; the sequence is KLQIACDNAV…LPNHNCIKHL (61 aa).

In terms of assembly, interacts with USP8, ERBB3, PRKN and BIRC6. Interacts with CSF2RB, EPOR, IL3RA, MYD88 and TBK1. Interacts with CLEC16A. Post-translationally, autoubiquitinated. Autoubiquitination leads to proteasomal degradation. Deubiquitinated by USP8 to get stabilized which induces apoptosis. As to expression, detected in ovary, testis and prostate.

The catalysed reaction is S-ubiquitinyl-[E2 ubiquitin-conjugating enzyme]-L-cysteine + [acceptor protein]-L-lysine = [E2 ubiquitin-conjugating enzyme]-L-cysteine + N(6)-ubiquitinyl-[acceptor protein]-L-lysine.. The protein operates within protein modification; protein ubiquitination. In terms of biological role, acts as E3 ubiquitin-protein ligase and regulates the degradation of target proteins. Polyubiquitinates MYD88. Negatively regulates MYD88-dependent production of pro-inflammatory cytokines. Can promote TRIF-dependent production of type I interferon and inhibits infection with vesicular stomatitis virus. Promotes also activation of TBK1 and IRF3. Involved in the ubiquitination of erythropoietin (EPO) and interleukin-3 (IL-3) receptors. Thus, through maintaining basal levels of cytokine receptors, RNF41 is involved in the control of hematopoietic progenitor cell differentiation into myeloerythroid lineages. Contributes to the maintenance of steady-state ERBB3 levels by mediating its growth factor-independent degradation. Involved in the degradation of the inhibitor of apoptosis BIRC6 and thus is an important regulator of cell death by promoting apoptosis. Also acts as a PRKN modifier that accelerates its degradation, resulting in a reduction of PRKN activity, influencing the balance of intracellular redox state. The RNF41-PRKN pathway regulates autophagosome-lysosome fusion during late mitophagy. Mitophagy is a selective form of autophagy necessary for mitochondrial quality control. The polypeptide is E3 ubiquitin-protein ligase NRDP1 (RNF41) (Homo sapiens (Human)).